A 641-amino-acid polypeptide reads, in one-letter code: Phosphomethylpyrimidine synthase (641 aa).

Residues 1-12 (MTDTSTQNTATP) are compositionally biased toward polar residues. A disordered region spans residues 1 to 25 (MTDTSTQNTATPTDEYGAEIHPKHS). Residues N200, M229, Y258, H294, 314-316 (SRG), 355-358 (DGLR), and E394 contribute to the substrate site. Residue H398 participates in Zn(2+) binding. Y421 lines the substrate pocket. H462 is a binding site for Zn(2+). Residues C542, C545, and C550 each contribute to the [4Fe-4S] cluster site.

Belongs to the ThiC family. [4Fe-4S] cluster is required as a cofactor.

The enzyme catalyses 5-amino-1-(5-phospho-beta-D-ribosyl)imidazole + S-adenosyl-L-methionine = 4-amino-2-methyl-5-(phosphooxymethyl)pyrimidine + CO + 5'-deoxyadenosine + formate + L-methionine + 3 H(+). It functions in the pathway cofactor biosynthesis; thiamine diphosphate biosynthesis. Catalyzes the synthesis of the hydroxymethylpyrimidine phosphate (HMP-P) moiety of thiamine from aminoimidazole ribotide (AIR) in a radical S-adenosyl-L-methionine (SAM)-dependent reaction. This Corynebacterium jeikeium (strain K411) protein is Phosphomethylpyrimidine synthase.